The following is a 210-amino-acid chain: uncharacterized protein (210 aa).

Positions 1-20 (MRVITLSGITLFLLASLASA) are cleaved as a signal peptide. Topologically, residues 21 to 175 (IELTFKLENQ…YSTVKSTQAR (155 aa)) are lumenal. Residues 32–115 (KQCYYLDSFH…DKIVTMEITM (84 aa)) enclose the GOLD domain. A glycan (N-linked (GlcNAc...) asparagine) is linked at N165. Residues 176–196 (IFWFSLAESIMVVALSALQVF) form a helical membrane-spanning segment. Topologically, residues 197–210 (IVKTFFKRSGRRGV) are cytoplasmic.

This sequence belongs to the EMP24/GP25L family.

The protein localises to the endoplasmic reticulum membrane. This is an uncharacterized protein from Schizosaccharomyces pombe (strain 972 / ATCC 24843) (Fission yeast).